We begin with the raw amino-acid sequence, 458 residues long: Secretion-regulating guanine nucleotide exchange factor (458 aa).

RCC1 repeat units follow at residues 15–67 (AALF…VTDG), 68–119 (GDLF…LTEN), 120–171 (GQVL…ATAS), 172–230 (GIVF…LTDA), 231–283 (GEVY…QTET), 284–351 (GKMF…IIGG), and 352–402 (VCYS…LCQL). A disordered region spans residues 420–458 (DAIEDTESQKAMDKERNWKERQSETSTQSQSDWSRNGGL). Residues 426 to 442 (ESQKAMDKERNWKERQS) are compositionally biased toward basic and acidic residues. Serine 427 is subject to Phosphoserine.

Interacts with SEC5. The interaction occurs only in the presence of magnesium or manganese and is stimulated by dCTP or GTP.

Its subcellular location is the cytoplasm. The protein localises to the nucleus. Functionally, probable guanine nucleotide exchange factor (GEF), which may be involved in the secretion process. This is Secretion-regulating guanine nucleotide exchange factor (SERGEF) from Homo sapiens (Human).